Consider the following 466-residue polypeptide: Alpha-galacturonidase (466 aa).

Residue 11 to 78 participates in NAD(+) binding; sequence VKIAYIGGGS…GKWNYETANT (68 aa). Asn-157 contacts substrate. Cys-179 serves as a coordination point for Mn(2+). His-180 acts as the Proton donor in catalysis. His-216 is a Mn(2+) binding site.

The protein belongs to the glycosyl hydrolase 4 family. Homotetramer. Requires NAD(+) as cofactor. Mn(2+) serves as cofactor.

It catalyses the reaction [(1-&gt;4)-alpha-D-galacturonosyl](n) + H2O = alpha-D-galacturonate + [(1-&gt;4)-alpha-D-galacturonosyl](n-1). Its function is as follows. Alpha-galacturonidase able to catalyze the hydrolysis of the chromogenic substrate p-nitrophenyl-alpha-D-galacturonic acid (pNPalphaGalUA). It is probable that alpha-1,4-di-galacturonate (GalUA(2)) is the naturally occurring substrate. This is Alpha-galacturonidase from Lachnoclostridium phytofermentans (strain ATCC 700394 / DSM 18823 / ISDg) (Clostridium phytofermentans).